The sequence spans 232 residues: Putative N-acetylmannosamine-6-phosphate 2-epimerase (232 aa).

Belongs to the NanE family.

It catalyses the reaction an N-acyl-D-glucosamine 6-phosphate = an N-acyl-D-mannosamine 6-phosphate. It functions in the pathway amino-sugar metabolism; N-acetylneuraminate degradation; D-fructose 6-phosphate from N-acetylneuraminate: step 3/5. Its function is as follows. Converts N-acetylmannosamine-6-phosphate (ManNAc-6-P) to N-acetylglucosamine-6-phosphate (GlcNAc-6-P). The sequence is that of Putative N-acetylmannosamine-6-phosphate 2-epimerase from Borrelia garinii subsp. bavariensis (strain ATCC BAA-2496 / DSM 23469 / PBi) (Borreliella bavariensis).